The chain runs to 260 residues: MNPNCARCCKIVYPTEKVNCLDKFWHKACFHCETCKMTLNMKNYKGYEKKPYCNAHYPKQSFTMVADTPENLRLKQQSELQSQVRYKEEFEKNKGKGFSVVADTPELQRIKKTQDQISNIKYHEEFEKSRMGPSGGEGLECERRDPQESSYRRPQEQQQPHHIPASTPVYQQPQQQPAAQSYGGYKEPAAPASIQRSAPGGGGKRYRAVYDYSAADEDEVSFQDGDTIVNVQQIDDGWMYGTVERTGDTGMLPANYVEAI.

Residue methionine 1 is modified to N-acetylmethionine. One can recognise an LIM zinc-binding domain in the interval 5–56 (CARCCKIVYPTEKVNCLDKFWHKACFHCETCKMTLNMKNYKGYEKKPYCNAH). Residue lysine 42 is modified to N6-acetyllysine. 2 Nebulin repeats span residues 61 to 95 (SFTM…KNKG) and 97 to 131 (GFSV…KSRM). Phosphothreonine is present on threonine 68. Lysine 75 is subject to N6-methyllysine. Serine 99 bears the Phosphoserine mark. Threonine 104 carries the phosphothreonine modification. Lysine 112 is subject to N6-succinyllysine. Serine 118 and serine 134 each carry phosphoserine. The segment at 123-204 (HEEFEKSRMG…QRSAPGGGGK (82 aa)) is disordered. Residues 140 to 155 (ECERRDPQESSYRRPQ) are compositionally biased toward basic and acidic residues. A compositionally biased stretch (low complexity) spans 171–180 (QQPQQQPAAQ). One can recognise an SH3 domain in the interval 201-260 (GGGKRYRAVYDYSAADEDEVSFQDGDTIVNVQQIDDGWMYGTVERTGDTGMLPANYVEAI).

In terms of assembly, interacts with F-actin. Interacts with ANKRD54. Interacts with KBTBD10. Phosphorylated.

Its subcellular location is the cytoplasm. It is found in the cell cortex. The protein localises to the cytoskeleton. In terms of biological role, plays an important role in the regulation of dynamic actin-based, cytoskeletal activities. Agonist-dependent changes in LASP1 phosphorylation may also serve to regulate actin-associated ion transport activities, not only in the parietal cell but also in certain other F-actin-rich secretory epithelial cell types. The polypeptide is LIM and SH3 domain protein 1 (LASP1) (Bos taurus (Bovine)).